The chain runs to 946 residues: Bifunctional glutamine synthetase adenylyltransferase/adenylyl-removing enzyme (946 aa).

The adenylyl removase stretch occupies residues 1–440 (MKPLSSPLQQ…VFNELIGDDE (440 aa)). Residues 449 to 946 (SEQWRELWQD…ASWQKWLVEE (498 aa)) form an adenylyl transferase region.

It belongs to the GlnE family. The cofactor is Mg(2+).

It carries out the reaction [glutamine synthetase]-O(4)-(5'-adenylyl)-L-tyrosine + phosphate = [glutamine synthetase]-L-tyrosine + ADP. The enzyme catalyses [glutamine synthetase]-L-tyrosine + ATP = [glutamine synthetase]-O(4)-(5'-adenylyl)-L-tyrosine + diphosphate. Functionally, involved in the regulation of glutamine synthetase GlnA, a key enzyme in the process to assimilate ammonia. When cellular nitrogen levels are high, the C-terminal adenylyl transferase (AT) inactivates GlnA by covalent transfer of an adenylyl group from ATP to specific tyrosine residue of GlnA, thus reducing its activity. Conversely, when nitrogen levels are low, the N-terminal adenylyl removase (AR) activates GlnA by removing the adenylyl group by phosphorolysis, increasing its activity. The regulatory region of GlnE binds the signal transduction protein PII (GlnB) which indicates the nitrogen status of the cell. This Escherichia coli O8 (strain IAI1) protein is Bifunctional glutamine synthetase adenylyltransferase/adenylyl-removing enzyme.